Reading from the N-terminus, the 85-residue chain is Large ribosomal subunit protein bL27 (85 aa).

The segment covering 1-10 has biased composition (gly residues); sequence MAQKKGGGST. Positions 1-21 are disordered; that stretch reads MAQKKGGGSTRNGRDSQPKML.

This sequence belongs to the bacterial ribosomal protein bL27 family.

This Leptothrix cholodnii (strain ATCC 51168 / LMG 8142 / SP-6) (Leptothrix discophora (strain SP-6)) protein is Large ribosomal subunit protein bL27.